A 282-amino-acid polypeptide reads, in one-letter code: ABC transporter I family member 21 (282 aa).

Residues 13-248 (IRVSGMQFSY…KTSPNLLSVV (236 aa)) enclose the ABC transporter domain. 46–53 (GANGSGKT) contacts ATP.

The protein belongs to the ABC transporter superfamily. ABCI family. Expressed in root elongating zone and root meristem, as well as in elongating etiolated hypocotyls.

It localises to the cytoplasm. This is ABC transporter I family member 21 (ABCI21) from Arabidopsis thaliana (Mouse-ear cress).